A 426-amino-acid polypeptide reads, in one-letter code: 3-phosphoshikimate 1-carboxyvinyltransferase (426 aa).

Residues Lys-22, Ser-23, and Arg-27 each coordinate 3-phosphoshikimate. Lys-22 lines the phosphoenolpyruvate pocket. Residues Gly-96 and Arg-124 each coordinate phosphoenolpyruvate. Ser-170, Ser-171, Gln-172, Ser-198, Asp-314, Asn-337, and Lys-341 together coordinate 3-phosphoshikimate. Phosphoenolpyruvate is bound at residue Gln-172. The Proton acceptor role is filled by Asp-314. Phosphoenolpyruvate-binding residues include Arg-345, Arg-387, and Lys-412.

This sequence belongs to the EPSP synthase family. As to quaternary structure, monomer.

It localises to the cytoplasm. The catalysed reaction is 3-phosphoshikimate + phosphoenolpyruvate = 5-O-(1-carboxyvinyl)-3-phosphoshikimate + phosphate. Its pathway is metabolic intermediate biosynthesis; chorismate biosynthesis; chorismate from D-erythrose 4-phosphate and phosphoenolpyruvate: step 6/7. Its function is as follows. Catalyzes the transfer of the enolpyruvyl moiety of phosphoenolpyruvate (PEP) to the 5-hydroxyl of shikimate-3-phosphate (S3P) to produce enolpyruvyl shikimate-3-phosphate and inorganic phosphate. This Shewanella oneidensis (strain ATCC 700550 / JCM 31522 / CIP 106686 / LMG 19005 / NCIMB 14063 / MR-1) protein is 3-phosphoshikimate 1-carboxyvinyltransferase.